The chain runs to 329 residues: Sulfate/thiosulfate import ATP-binding protein CysA (329 aa).

The region spanning 3–237 is the ABC transporter domain; sequence IEVRNVSKRF…PANDFVYHFL (235 aa). 35–42 contributes to the ATP binding site; the sequence is GPSGCGKT.

This sequence belongs to the ABC transporter superfamily. Sulfate/tungstate importer (TC 3.A.1.6) family. The complex is composed of two ATP-binding proteins (CysA), two transmembrane proteins (CysT and CysW) and a solute-binding protein (CysP).

The protein localises to the cell inner membrane. It catalyses the reaction sulfate(out) + ATP + H2O = sulfate(in) + ADP + phosphate + H(+). The enzyme catalyses thiosulfate(out) + ATP + H2O = thiosulfate(in) + ADP + phosphate + H(+). Functionally, part of the ABC transporter complex CysAWTP involved in sulfate/thiosulfate import. Responsible for energy coupling to the transport system. This is Sulfate/thiosulfate import ATP-binding protein CysA from Pseudomonas putida (strain ATCC 47054 / DSM 6125 / CFBP 8728 / NCIMB 11950 / KT2440).